The sequence spans 102 residues: uncharacterized protein (102 aa).

This is an uncharacterized protein from Schizosaccharomyces pombe (strain 972 / ATCC 24843) (Fission yeast).